The sequence spans 423 residues: Imidazolonepropionase (423 aa).

Fe(3+)-binding residues include H78 and H80. Positions 78 and 80 each coordinate Zn(2+). 4-imidazolone-5-propanoate contacts are provided by R87, Y150, and H183. Y150 serves as a coordination point for N-formimidoyl-L-glutamate. Position 247 (H247) interacts with Fe(3+). A Zn(2+)-binding site is contributed by H247. Position 250 (E250) interacts with 4-imidazolone-5-propanoate. D322 is a binding site for Fe(3+). Residue D322 coordinates Zn(2+). N-formimidoyl-L-glutamate contacts are provided by N324 and G326. S327 is a binding site for 4-imidazolone-5-propanoate.

Belongs to the metallo-dependent hydrolases superfamily. HutI family. Zn(2+) serves as cofactor. It depends on Fe(3+) as a cofactor.

It is found in the cytoplasm. The enzyme catalyses 4-imidazolone-5-propanoate + H2O = N-formimidoyl-L-glutamate. Its pathway is amino-acid degradation; L-histidine degradation into L-glutamate; N-formimidoyl-L-glutamate from L-histidine: step 3/3. In terms of biological role, catalyzes the hydrolytic cleavage of the carbon-nitrogen bond in imidazolone-5-propanoate to yield N-formimidoyl-L-glutamate. It is the third step in the universal histidine degradation pathway. The polypeptide is Imidazolonepropionase (Bacillus anthracis (strain A0248)).